A 318-amino-acid polypeptide reads, in one-letter code: Ribosomal RNA small subunit methyltransferase H (318 aa).

Residues 34–36 (GGY), Asp52, Phe79, Asp100, and Gln107 each bind S-adenosyl-L-methionine. A disordered region spans residues 286-318 (GPAPDEARANPRARSAKLRAAARTAAPAWETVS). The segment covering 303–318 (LRAAARTAAPAWETVS) has biased composition (low complexity).

It belongs to the methyltransferase superfamily. RsmH family.

It is found in the cytoplasm. The catalysed reaction is cytidine(1402) in 16S rRNA + S-adenosyl-L-methionine = N(4)-methylcytidine(1402) in 16S rRNA + S-adenosyl-L-homocysteine + H(+). Specifically methylates the N4 position of cytidine in position 1402 (C1402) of 16S rRNA. This chain is Ribosomal RNA small subunit methyltransferase H, found in Paramagnetospirillum magneticum (strain ATCC 700264 / AMB-1) (Magnetospirillum magneticum).